The sequence spans 648 residues: Replication restart protein PriA (648 aa).

The Helicase ATP-binding domain maps to 131–297 (TIFNESNKPT…KTHKYQLVTL (167 aa)). 144 to 151 (GVTGSGKT) is a binding site for ATP. The short motif at 240-243 (DEEH) is the DEAH box element. Zn(2+)-binding residues include cysteine 358, cysteine 361, cysteine 367, cysteine 370, cysteine 385, cysteine 388, cysteine 398, and cysteine 401. Positions 393–548 (KIFSSCPECL…SFFTNELEIR (156 aa)) constitute a Helicase C-terminal domain.

Belongs to the helicase family. PriA subfamily. Component of the replication restart primosome. The cofactor is Zn(2+).

It catalyses the reaction Couples ATP hydrolysis with the unwinding of duplex DNA by translocating in the 3'-5' direction.. The catalysed reaction is ATP + H2O = ADP + phosphate + H(+). Its function is as follows. Initiates the restart of stalled replication forks, which reloads the replicative helicase on sites other than the origin of replication. Recognizes and binds to abandoned replication forks and remodels them to uncover a helicase loading site. Promotes assembly of the primosome at these replication forks. This chain is Replication restart protein PriA, found in Rickettsia typhi (strain ATCC VR-144 / Wilmington).